The chain runs to 214 residues: Osteoclast-stimulating factor 1 (214 aa).

Serine 2 carries the N-acetylserine modification. An SH3 domain is found at 12–71 (GQVKVFRALYTFEPRTPDELYFEEGDIIYITDMSDTSWWKGTCKGRTGLIPSNYVAEQAE). 3 ANK repeats span residues 72 to 101 (SIDNPLHEAAKRGNLSWLRECLDNRVGVNG), 105 to 135 (AGSTALYWACHGGHKDIVEVLFTQPNVELNQ), and 139 to 168 (LGDTALHAAAWKGYADIVQLLLAKGARTDL). A Phosphothreonine modification is found at threonine 200. Phosphoserine is present on residues serine 202 and serine 213.

As to quaternary structure, interacts with SRC and SMN1. Interacts with FASLG.

The protein localises to the cytoplasm. Its function is as follows. Induces bone resorption, acting probably through a signaling cascade which results in the secretion of factor(s) enhancing osteoclast formation and activity. This is Osteoclast-stimulating factor 1 (Ostf1) from Rattus norvegicus (Rat).